Consider the following 1634-residue polypeptide: Phosphatidylinositol 4-phosphate 3-kinase C2 domain-containing subunit beta (1634 aa).

The tract at residues 2–298 (SSTQGNGEHW…YASRYGNRKN (297 aa)) is interaction with GRB2. Disordered stretches follow at residues 45–188 (EENR…QPSD) and 259–315 (GRGP…VGSR). A compositionally biased stretch (polar residues) spans 87–112 (SDPTLNYNSLSPQEGPPNHSTSQGPQ). Residues 176 to 187 (GSPSSSKISQPS) are compositionally biased toward low complexity. The segment covering 259-270 (GRGPLDFSKDTS) has biased composition (basic and acidic residues). Positions 375-463 (EVNLKVTVLC…DIDIRLQLME (89 aa)) constitute a PI3K-RBD domain. One can recognise a C2 PI3K-type domain in the interval 635–786 (VYATHRIPII…DSVILQIDFP (152 aa)). The PIK helical domain maps to 805–981 (RYEFGSLREE…QYLLAALLCC (177 aa)). In terms of domain architecture, PI3K/PI4K catalytic spans 1050–1328 (VPRDCSYFNS…LIESSLGSVA (279 aa)). A G-loop region spans residues 1056-1062 (YFNSNAV). Residues 1192–1200 (GICDRHNDN) form a catalytic loop region. The activation loop stretch occupies residues 1211 to 1237 (HIDFGRFLGHAQMFGNIKRDRAPFVFT). Residues 1365–1481 (GRISDVFLCR…TFFHPLPRDE (117 aa)) form the PX domain. Positions 1504-1624 (VGGEVKLSIS…DLAQEKTGWF (121 aa)) constitute a C2 domain.

This sequence belongs to the PI3/PI4-kinase family. Part of a complex with ERBB2 and EGFR. Part of a complex with phosphorylated EGFR and GRB2. Interacts with phosphorylated EGFR and PDGFR, maybe indirectly. Interacts with GRB2. Ca(2+) is required as a cofactor. Requires Mg(2+) as cofactor. It depends on Mn(2+) as a cofactor. As to expression, expressed in columnar and transitional epithelia, mononuclear cells, and ganglion cells (at protein level). Widely expressed, with highest levels in thymus and placenta and lowest in peripheral blood, skeletal muscle and kidney.

Its subcellular location is the microsome. It is found in the cell membrane. The protein resides in the cytoplasm. It localises to the cytosol. The protein localises to the nucleus. Its subcellular location is the endoplasmic reticulum. The catalysed reaction is a 1,2-diacyl-sn-glycero-3-phospho-(1D-myo-inositol 4-phosphate) + ATP = a 1,2-diacyl-sn-glycero-3-phospho-(1D-myo-inositol-3,4-bisphosphate) + ADP + H(+). It catalyses the reaction a 1,2-diacyl-sn-glycero-3-phospho-(1D-myo-inositol) + ATP = a 1,2-diacyl-sn-glycero-3-phospho-(1D-myo-inositol-3-phosphate) + ADP + H(+). Its activity is regulated as follows. Activated by GRB2. In terms of biological role, phosphorylates PtdIns and PtdIns4P with a preference for PtdIns. Does not phosphorylate PtdIns(4,5)P2. May be involved in EGF and PDGF signaling cascades. This chain is Phosphatidylinositol 4-phosphate 3-kinase C2 domain-containing subunit beta (PIK3C2B), found in Homo sapiens (Human).